The primary structure comprises 494 residues: Amidophosphoribosyltransferase (494 aa).

The propeptide occupies 1–10 (MSNYSGLNEE). The active-site Nucleophile is C11. In terms of domain architecture, Glutamine amidotransferase type-2 spans 11–231 (CGVFGIWNHP…AGEYVVITDE (221 aa)). Positions 294, 356, and 357 each coordinate Mg(2+).

It in the C-terminal section; belongs to the purine/pyrimidine phosphoribosyltransferase family. The cofactor is Mg(2+).

It carries out the reaction 5-phospho-beta-D-ribosylamine + L-glutamate + diphosphate = 5-phospho-alpha-D-ribose 1-diphosphate + L-glutamine + H2O. The protein operates within purine metabolism; IMP biosynthesis via de novo pathway; N(1)-(5-phospho-D-ribosyl)glycinamide from 5-phospho-alpha-D-ribose 1-diphosphate: step 1/2. Functionally, catalyzes the formation of phosphoribosylamine from phosphoribosylpyrophosphate (PRPP) and glutamine. The protein is Amidophosphoribosyltransferase of Staphylococcus epidermidis (strain ATCC 35984 / DSM 28319 / BCRC 17069 / CCUG 31568 / BM 3577 / RP62A).